We begin with the raw amino-acid sequence, 288 residues long: Energy-coupling factor transporter ATP-binding protein EcfA2 (288 aa).

Positions 3–246 (IKLEQLGYCY…PDELVDLGLS (244 aa)) constitute an ABC transporter domain. ATP is bound at residue 40 to 47 (GHTGSGKS).

It belongs to the ABC transporter superfamily. Energy-coupling factor EcfA family. Forms a stable energy-coupling factor (ECF) transporter complex composed of 2 membrane-embedded substrate-binding proteins (S component), 2 ATP-binding proteins (A component) and 2 transmembrane proteins (T component).

Its subcellular location is the cell membrane. ATP-binding (A) component of a common energy-coupling factor (ECF) ABC-transporter complex. Unlike classic ABC transporters this ECF transporter provides the energy necessary to transport a number of different substrates. This Listeria innocua serovar 6a (strain ATCC BAA-680 / CLIP 11262) protein is Energy-coupling factor transporter ATP-binding protein EcfA2.